Here is a 326-residue protein sequence, read N- to C-terminus: D-allose transport system permease protein AlsC (326 aa).

Residues 1 to 18 (MGFTTRVKSEASEKKPFN) are Cytoplasmic-facing. Residues 19–39 (FALFWDKYGTFFILAIIVAIF) traverse the membrane as a helical segment. The Periplasmic segment spans residues 40–70 (GSLSPEYFLTTNNITQIFVQSSVTVLIGMGE). Residues 71-91 (FFAILVAGIDLSVGAILALSG) traverse the membrane as a helical segment. Residues 92 to 101 (MVTAKLMLAG) lie on the Cytoplasmic side of the membrane. The chain crosses the membrane as a helical span at residues 102–122 (VDPFLAAMIGGVLVGGALGAI). The Periplasmic portion of the chain corresponds to 123-124 (NG). A helical transmembrane segment spans residues 125–145 (CLVNWTGLHPFIITLGTNAIF). The Cytoplasmic segment spans residues 146 to 149 (RGIT). A helical transmembrane segment spans residues 150–170 (LVISDANSVYGFSFDFVNFFA). The Periplasmic segment spans residues 171 to 172 (AS). The helical transmembrane segment at 173-193 (VIGIPVPVIFSLIVALILWFL) threads the bilayer. Topologically, residues 194–221 (TTRMRLGRNIYALGGNKNSAFYSGIDVK) are cytoplasmic. The helical transmembrane segment at 222-242 (FHILVVFIISGVCAGLAGVVS) threads the bilayer. The Periplasmic portion of the chain corresponds to 243–252 (TARLGAAEPL). A helical transmembrane segment spans residues 253-273 (AGMGFETYAIASAIIGGTSFF). Residues 274 to 278 (GGKGR) lie on the Cytoplasmic side of the membrane. Helical transmembrane passes span 279–299 (IFSV…LNIL) and 300–320 (QVQT…AVAL). Topologically, residues 321–326 (DRLISK) are cytoplasmic.

It belongs to the binding-protein-dependent transport system permease family. AraH/RbsC subfamily.

It is found in the cell inner membrane. Part of the binding-protein-dependent transport system AlsBAC for D-allose; probably responsible for the translocation of the substrate across the membrane. The sequence is that of D-allose transport system permease protein AlsC (alsC) from Escherichia coli (strain K12).